The sequence spans 234 residues: RNA-binding protein pno1 (234 aa).

The segment at 1–39 is disordered; the sequence is MPTQDSAAKQADDGFQLVQKKSRKRKMTMDMDDADPKAG. A KH domain is found at 158–207; it reads LARCIGRLAGKGGRTKFTIENVTKTRIVLADSKVHILGSYQNIRAARTAL.

The protein belongs to the PNO1 family.

Its subcellular location is the nucleus. It is found in the nucleolus. In Ixodes scapularis (Black-legged tick), this protein is RNA-binding protein pno1.